An 86-amino-acid chain; its full sequence is RNA-binding protein Hfq (86 aa).

The Sm domain occupies 9-68; sequence DPFLNALRRERIPVSIYLVNGIKLQGQIESFDQFVILLKNTVNQMVYKHAISTVVPARPV. The tract at residues 65 to 86 is disordered; the sequence is ARPVSHHSGERGSDRPSEKSED. Residues 71–86 are compositionally biased toward basic and acidic residues; that stretch reads HSGERGSDRPSEKSED.

It belongs to the Hfq family. Homohexamer.

Functionally, RNA chaperone that binds small regulatory RNA (sRNAs) and mRNAs to facilitate mRNA translational regulation in response to envelope stress, environmental stress and changes in metabolite concentrations. Also binds with high specificity to tRNAs. The chain is RNA-binding protein Hfq from Vibrio vulnificus (strain YJ016).